A 350-amino-acid chain; its full sequence is C4-dicarboxylate-binding protein DctB (350 aa).

An N-terminal signal peptide occupies residues Met1 to Ala18.

This sequence belongs to the bacterial solute-binding protein 7 family.

Its subcellular location is the secreted. In terms of biological role, part of the binding-protein-dependent transport system for uptake of C4-dicarboxylates. Responsible for growth on fumarate and succinate but not malate. Is not directly involved in C4-dicarboxylate uptake, but plays a sensory role in the DctS/DctR two-component system which regulates the expression of the dctA C4-dicarboxylate transporter. In Bacillus subtilis (strain 168), this protein is C4-dicarboxylate-binding protein DctB (dctB).